The sequence spans 211 residues: MGNIITDTIIITSDKCDIVDNDNVERIQVWLSKNILRKFQINENEPLQLIILKRFKRILLICPSHDISQHVMDASRALEMENFNFSYSLQDGQRNLTKQYLKVPESEKMFLISPPASPPPEFDFSKCEDAPQRHIQSHIQQDQQQRLEASQLLPNNPDKNNNGTFTLLKSKVGAITIDRCPTNDGNGQMQLADHVKTAFPPKSIFDTDDDD.

Phosphoserine occurs at positions 113 and 117. Position 182 is a phosphothreonine (threonine 182).

This sequence belongs to the RCAN family.

In terms of biological role, inhibits calcineurin-dependent transcriptional responses by binding to the catalytic domain of calcineurin. This is Calcipressin-like protein (RCN1) from Saccharomyces cerevisiae (strain ATCC 204508 / S288c) (Baker's yeast).